A 767-amino-acid chain; its full sequence is Photosystem I P700 chlorophyll a apoprotein A1 (767 aa).

8 consecutive transmembrane segments (helical) span residues 72–95 (IFSA…FHGA), 158–181 (LMSL…FHYH), 197–221 (LNHH…HVSL), 305–323 (IAHH…GHMY), 364–387 (WHAQ…QHMY), 403–429 (IGLF…IAMI), 451–473 (ALIS…LYIH), and 548–566 (FMVH…LILL). [4Fe-4S] cluster-binding residues include Cys-590 and Cys-599. 2 consecutive transmembrane segments (helical) span residues 606–627 (HVFL…HFSW) and 681–703 (TSAY…MFLF). Residue His-692 participates in chlorophyll a' binding. Positions 700 and 708 each coordinate chlorophyll a. A phylloquinone-binding site is contributed by Trp-709. The chain crosses the membrane as a helical span at residues 741–761 (AVGVAHYLLGGIATTWAFFHA).

Belongs to the PsaA/PsaB family. The PsaA/B heterodimer binds the P700 chlorophyll special pair and subsequent electron acceptors. PSI consists of a core antenna complex that captures photons, and an electron transfer chain that converts photonic excitation into a charge separation. The cyanobacterial PSI reaction center is composed of one copy each of PsaA,B,C,D,E,F,I,J,K,L,M and X, and forms trimeric complexes. The cofactor is PSI electron transfer chain: 5 chlorophyll a, 1 chlorophyll a', 2 phylloquinones and 3 4Fe-4S clusters. PSI core antenna: 90 chlorophyll a, 22 carotenoids, 3 phospholipids and 1 galactolipid. P700 is a chlorophyll a/chlorophyll a' dimer, A0 is one or more chlorophyll a, A1 is one or both phylloquinones and FX is a shared 4Fe-4S iron-sulfur center..

Its subcellular location is the cellular thylakoid membrane. The catalysed reaction is reduced [plastocyanin] + hnu + oxidized [2Fe-2S]-[ferredoxin] = oxidized [plastocyanin] + reduced [2Fe-2S]-[ferredoxin]. In terms of biological role, psaA and PsaB bind P700, the primary electron donor of photosystem I (PSI), as well as the electron acceptors A0, A1 and FX. PSI is a plastocyanin/cytochrome c6-ferredoxin oxidoreductase, converting photonic excitation into a charge separation, which transfers an electron from the donor P700 chlorophyll pair to the spectroscopically characterized acceptors A0, A1, FX, FA and FB in turn. Oxidized P700 is reduced on the lumenal side of the thylakoid membrane by plastocyanin or cytochrome c6. This Synechococcus sp. (strain WH7803) protein is Photosystem I P700 chlorophyll a apoprotein A1.